The sequence spans 829 residues: DNA ligase (829 aa).

NAD(+) is bound by residues 38 to 42 (DAEYD), 87 to 88 (SL), and glutamate 127. The active-site N6-AMP-lysine intermediate is the lysine 129. Residues arginine 150, glutamate 187, lysine 305, and lysine 329 each coordinate NAD(+). Residues cysteine 455, cysteine 458, cysteine 473, and cysteine 479 each contribute to the Zn(2+) site. The segment at 534–564 (ETADKGSSENENGDAETVSGDLSKYNTQNGK) is disordered. The region spanning 752 to 829 (GINKAVAGKT…SEAELLTLLC (78 aa)) is the BRCT domain.

Belongs to the NAD-dependent DNA ligase family. LigA subfamily. Mg(2+) is required as a cofactor. It depends on Mn(2+) as a cofactor.

The enzyme catalyses NAD(+) + (deoxyribonucleotide)n-3'-hydroxyl + 5'-phospho-(deoxyribonucleotide)m = (deoxyribonucleotide)n+m + AMP + beta-nicotinamide D-nucleotide.. Its function is as follows. DNA ligase that catalyzes the formation of phosphodiester linkages between 5'-phosphoryl and 3'-hydroxyl groups in double-stranded DNA using NAD as a coenzyme and as the energy source for the reaction. It is essential for DNA replication and repair of damaged DNA. The chain is DNA ligase from Neisseria gonorrhoeae (strain ATCC 700825 / FA 1090).